The chain runs to 192 residues: Acetyltransferase PA3944 (192 aa).

Positions 18 to 187 constitute an N-acetyltransferase domain; that stretch reads LLLRAWRDSD…RHILYRVDAA (170 aa). CoA-binding positions include 105–107, Gly113, Asn145, and 150–152; these read WRL and GLM.

Its function is as follows. Catalyzes the transfer of an acetyl group from acetyl coenzyme A (AcCoA) to an acceptor substrate and releases both CoA and the acetylated product. It prefers the peptide Asp-Phe methyl ester (or aspartame) and the peptide antibiotics polymyxin B and colistin. Other substrates like dopamine, serotonin, puromycin, chloramphenicol, D-glucosamine, glycine and N-alpha-acetyl-L-glutamine are used and displayed lower activity. In Pseudomonas aeruginosa (strain ATCC 15692 / DSM 22644 / CIP 104116 / JCM 14847 / LMG 12228 / 1C / PRS 101 / PAO1), this protein is Acetyltransferase PA3944.